Reading from the N-terminus, the 224-residue chain is UPF0758 protein VSAL_I0192 (224 aa).

The MPN domain occupies 102 to 224; it reads ALTSPEHTKR…IVSFAERGWI (123 aa). Zn(2+)-binding residues include H173, H175, and D186. The JAMM motif motif lies at 173–186; the sequence is HNHPSGVAEPSQAD.

Belongs to the UPF0758 family.

In Aliivibrio salmonicida (strain LFI1238) (Vibrio salmonicida (strain LFI1238)), this protein is UPF0758 protein VSAL_I0192.